We begin with the raw amino-acid sequence, 281 residues long: 2-dehydro-3-deoxyphosphooctonate aldolase (281 aa).

This sequence belongs to the KdsA family.

It localises to the cytoplasm. It carries out the reaction D-arabinose 5-phosphate + phosphoenolpyruvate + H2O = 3-deoxy-alpha-D-manno-2-octulosonate-8-phosphate + phosphate. Its pathway is carbohydrate biosynthesis; 3-deoxy-D-manno-octulosonate biosynthesis; 3-deoxy-D-manno-octulosonate from D-ribulose 5-phosphate: step 2/3. It participates in bacterial outer membrane biogenesis; lipopolysaccharide biosynthesis. The polypeptide is 2-dehydro-3-deoxyphosphooctonate aldolase (Psychromonas ingrahamii (strain DSM 17664 / CCUG 51855 / 37)).